Here is a 262-residue protein sequence, read N- to C-terminus: Granzyme A (262 aa).

The first 26 residues, M1–C26, serve as a signal peptide directing secretion. The propeptide at E27 to K28 is activation peptide. The 231-residue stretch at I29–K259 folds into the Peptidase S1 domain. A disulfide bridge connects residues C54 and C70. Residues H69 and D114 each act as charge relay system in the active site. 3 cysteine pairs are disulfide-bonded: C148–C218, C179–C197, and C208–C234. N170 is a glycosylation site (N-linked (GlcNAc...) asparagine). Residue S212 is the Charge relay system of the active site.

The protein belongs to the peptidase S1 family. Granzyme subfamily. In terms of assembly, homodimer; disulfide-linked. Interacts with APEX1.

It is found in the secreted. The protein resides in the cytoplasmic granule. It carries out the reaction Hydrolysis of proteins, including fibronectin, type IV collagen and nucleolin. Preferential cleavage: -Arg-|-Xaa-, -Lys-|-Xaa- &gt;&gt; -Phe-|-Xaa- in small molecule substrates.. Functionally, abundant protease in the cytosolic granules of cytotoxic T-cells and NK-cells which activates caspase-independent pyroptosis when delivered into the target cell through the immunological synapse. It cleaves after Lys or Arg. Once delivered into the target cell, acts by catalyzing cleavage of gasdermin-B (GSDMB), releasing the pore-forming moiety of GSDMB, thereby triggering pyroptosis and target cell death. Cleaves APEX1 after 'Lys-31' and destroys its oxidative repair activity. Cleaves the nucleosome assembly protein SET after 'Lys-189', which disrupts its nucleosome assembly activity and allows the SET complex to translocate into the nucleus to nick and degrade the DNA. This is Granzyme A from Homo sapiens (Human).